A 457-amino-acid polypeptide reads, in one-letter code: Aromatic amino acid transport protein AroP (457 aa).

Residues 1 to 19 lie on the Cytoplasmic side of the membrane; that stretch reads MMEGQQHGEQLKRGLKNRH. Residues 20-40 form a helical membrane-spanning segment; the sequence is IQLIALGGAIGTGLFLGSASV. Residues 41–42 lie on the Periplasmic side of the membrane; sequence IQ. A helical transmembrane segment spans residues 43–63; it reads SAGPGIILGYAIAGFIAFLIM. The Cytoplasmic portion of the chain corresponds to 64–86; sequence RQLGEMVVEEPVAGSFSHFAYKY. A helical membrane pass occupies residues 87–107; that stretch reads WGSFAGFASGWNYWVLYVLVA. The Periplasmic segment spans residues 108-117; sequence MAELTAVGKY. Residues 118-138 form a helical membrane-spanning segment; that stretch reads IQFWYPEIPTWVSAAVFFVVI. At 139–155 the chain is on the cytoplasmic side; that stretch reads NAINLTNVKVFGEMEFW. Residues 156–176 form a helical membrane-spanning segment; that stretch reads FAIIKVIAVVAMIIFGGWLLF. The Periplasmic segment spans residues 177 to 201; that stretch reads SGNGGPQASVSNLWDQGGFLPHGFT. A helical membrane pass occupies residues 202 to 222; the sequence is GLVMMMAIIMFSFGGLELVGI. The Cytoplasmic portion of the chain corresponds to 223-240; sequence TAAEADNPEQSIPKATNQ. A helical transmembrane segment spans residues 241–261; sequence VIYRILIFYIGSLAVLLSLMP. Residues 262–271 lie on the Periplasmic side of the membrane; it reads WTRVTADTSP. The helical transmembrane segment at 272–292 threads the bilayer; it reads FVLIFHELGDTFVANALNIVV. At 293 to 333 the chain is on the cytoplasmic side; the sequence is LTAALSVYNSCVYCNSRMLFGLAQQGNAPKALASVDKRGVP. The chain crosses the membrane as a helical span at residues 334–354; it reads VNTILVSALVTALCVLINYLA. Over 355 to 358 the chain is Periplasmic; that stretch reads PESA. Residues 359 to 379 traverse the membrane as a helical segment; it reads FGLLMALVVSALVINWAMISL. Residues 380–399 are Cytoplasmic-facing; that stretch reads AHMKFRRAKQEQGVVTRFPA. A helical transmembrane segment spans residues 400 to 420; the sequence is LLYPLGNWICLLFMAAVLVIM. The Periplasmic segment spans residues 421–425; it reads LMTPG. A helical transmembrane segment spans residues 426–446; that stretch reads MAISVYLIPVWLIVLGIGYLF. The Cytoplasmic segment spans residues 447-457; sequence KEKTAKAVKAH.

Belongs to the amino acid-polyamine-organocation (APC) superfamily. Amino acid transporter (AAT) (TC 2.A.3.1) family.

The protein resides in the cell inner membrane. The catalysed reaction is L-phenylalanine(in) + H(+)(in) = L-phenylalanine(out) + H(+)(out). It catalyses the reaction L-tryptophan(in) + H(+)(in) = L-tryptophan(out) + H(+)(out). It carries out the reaction L-tyrosine(in) + H(+)(in) = L-tyrosine(out) + H(+)(out). Functionally, permease that is involved in the active transport across the cytoplasmic membrane of all three aromatic amino acids, phenylalanine, tyrosine and tryptophan. This is Aromatic amino acid transport protein AroP (aroP) from Shigella flexneri.